The chain runs to 941 residues: Cilia- and flagella-associated protein 69 (941 aa).

Residues 1–14 (MWTEEAGATAEAQE) are compositionally biased toward low complexity. Residues 1-26 (MWTEEAGATAEAQESGIRNKSSSSSQ) form a disordered region. The span at 16 to 26 (GIRNKSSSSSQ) shows a compositional bias: polar residues.

Highly expressed in the testis, specifically in sperm (at protein level). Expressed in the brain, kidney, liver, lung, and intestine.

It localises to the cell projection. It is found in the cilium. The protein localises to the flagellum. In terms of biological role, cilium- and flagellum-associated protein. In the olfactory epithelium, regulates the speed of activation and termination of the odor response and thus contributes to the robustness of olfactory transduction pathways. Required for sperm flagellum assembly and stability. This Homo sapiens (Human) protein is Cilia- and flagella-associated protein 69.